We begin with the raw amino-acid sequence, 519 residues long: Steroid 17-alpha-hydroxylase/17,20 lyase (519 aa).

Cys-455 lines the heme pocket.

The protein belongs to the cytochrome P450 family. The cofactor is heme.

Its subcellular location is the membrane. The enzyme catalyses a C21-steroid + reduced [NADPH--hemoprotein reductase] + O2 = a 17alpha-hydroxy-C21-steroid + oxidized [NADPH--hemoprotein reductase] + H2O + H(+). The catalysed reaction is 17alpha-hydroxyprogesterone + reduced [NADPH--hemoprotein reductase] + O2 = androst-4-ene-3,17-dione + acetate + oxidized [NADPH--hemoprotein reductase] + H2O + 2 H(+). It carries out the reaction 17alpha-hydroxypregnenolone + reduced [NADPH--hemoprotein reductase] + O2 = 3beta-hydroxyandrost-5-en-17-one + acetate + oxidized [NADPH--hemoprotein reductase] + H2O + 2 H(+). The protein operates within lipid metabolism; steroid biosynthesis. Conversion of pregnenolone and progesterone to their 17-alpha-hydroxylated products and subsequently to dehydroepiandrosterone (DHEA) and androstenedione. Catalyzes both the 17-alpha-hydroxylation and the 17,20-lyase reaction. This chain is Steroid 17-alpha-hydroxylase/17,20 lyase (CYP17A1), found in Rana dybowskii (Dybovsky's frog).